Reading from the N-terminus, the 292-residue chain is Alpha-soluble NSF attachment protein (292 aa).

Serine 2 is modified (N-acetylserine). Lysine 261 is covalently cross-linked (Glycyl lysine isopeptide (Lys-Gly) (interchain with G-Cter in ubiquitin)).

This sequence belongs to the SNAP family. As to quaternary structure, binds to vacuolar cis-SNARE complexes composed of the v-SNAREs NYV1, VTI1 and YKT6, and the t-SNAREs VAM3 and VAM7. Interacts with SEC18.

It localises to the membrane. In terms of biological role, SNARE complex protein that binds to cis-SNARE complexes on membranes and is required for vesicular transport between the endoplasmic reticulum and the Golgi apparatus and for homotypic vacuole fusion. During the priming step of membrane fusion, is released from cis-SNARE complexes by SEC18 to establish a pool of unpaired SNAREs, which are required for interactions in trans during docking and fusion steps. Can displace HOPS from SNARE complexes, which may be a prerequisite for trans-SNARE complex disassembly and subsequent rounds of priming, docking and fusion. The chain is Alpha-soluble NSF attachment protein (SEC17) from Saccharomyces cerevisiae (strain ATCC 204508 / S288c) (Baker's yeast).